The sequence spans 192 residues: Orotate phosphoribosyltransferase (192 aa).

116–124 provides a ligand contact to 5-phospho-alpha-D-ribose 1-diphosphate; that stretch reads EDIVTTGLS. The orotate site is built by threonine 120 and arginine 148.

It belongs to the purine/pyrimidine phosphoribosyltransferase family. PyrE subfamily. As to quaternary structure, homodimer. Mg(2+) is required as a cofactor.

It catalyses the reaction orotidine 5'-phosphate + diphosphate = orotate + 5-phospho-alpha-D-ribose 1-diphosphate. It participates in pyrimidine metabolism; UMP biosynthesis via de novo pathway; UMP from orotate: step 1/2. Its function is as follows. Catalyzes the transfer of a ribosyl phosphate group from 5-phosphoribose 1-diphosphate to orotate, leading to the formation of orotidine monophosphate (OMP). This is Orotate phosphoribosyltransferase from Brucella canis (strain ATCC 23365 / NCTC 10854 / RM-666).